Here is a 301-residue protein sequence, read N- to C-terminus: Ribosomal protein L11 methyltransferase (301 aa).

Positions 146, 167, 189, and 237 each coordinate S-adenosyl-L-methionine.

It belongs to the methyltransferase superfamily. PrmA family.

The protein resides in the cytoplasm. It catalyses the reaction L-lysyl-[protein] + 3 S-adenosyl-L-methionine = N(6),N(6),N(6)-trimethyl-L-lysyl-[protein] + 3 S-adenosyl-L-homocysteine + 3 H(+). Its function is as follows. Methylates ribosomal protein L11. This is Ribosomal protein L11 methyltransferase from Prochlorococcus marinus (strain MIT 9313).